We begin with the raw amino-acid sequence, 171 residues long: Endoribonuclease YbeY (171 aa).

Histidine 130, histidine 134, and histidine 140 together coordinate Zn(2+).

The protein belongs to the endoribonuclease YbeY family. It depends on Zn(2+) as a cofactor.

Its subcellular location is the cytoplasm. Single strand-specific metallo-endoribonuclease involved in late-stage 70S ribosome quality control and in maturation of the 3' terminus of the 16S rRNA. The protein is Endoribonuclease YbeY of Neisseria gonorrhoeae (strain ATCC 700825 / FA 1090).